A 433-amino-acid polypeptide reads, in one-letter code: MKNELEFAKKLIDFIYDSPSPFHSVDNIKNTLIENGFAEIKEENKWELNKNGKYFVKRNDSALIAFTVGSGFVAKKGFKIIGGHTDSPTFRIKPNPEMVSENSYIKLNTEVYGGPILSTWFDRPLSIAGRVTVRGKSALFPETKLLNIKRPILVIPNLAIHMNRDVNSGFKINPQVDTLPIIGIINDKFEKENYLMKIIASELGEDIENIIDFDLFLYEYDKGCIMGINNEFISSSRLDDMEMVHAGLNALVNAKCSEATNVLACFDNEEIGSATKQGADSQFLSDILERIVLSFGGDREDFFRALHNSFMISSDSAHAVHPNKGEKADPITRPHINEGPVIKISAAQKYTSDSNSIAVYEEVCRLSGVPYQKFVNRSDERGGSTIGPITATHTAIRTVDIGTPLLAMHSIRELCGTLDHMYVEKSFEEFYNL.

His-84, His-161, and His-409 together coordinate Zn(2+).

This sequence belongs to the peptidase M18 family. Zn(2+) is required as a cofactor.

The polypeptide is Probable M18 family aminopeptidase 2 (apeB) (Clostridium acetobutylicum (strain ATCC 824 / DSM 792 / JCM 1419 / IAM 19013 / LMG 5710 / NBRC 13948 / NRRL B-527 / VKM B-1787 / 2291 / W)).